Reading from the N-terminus, the 331-residue chain is Probable staphylococcal-like nuclease CAN1 (331 aa).

The N-myristoyl glycine moiety is linked to residue Gly-2. Cys-10 carries the S-palmitoyl cysteine lipid modification. In terms of domain architecture, TNase-like spans 136–313 (HTLPVDAKAV…QSGRKGLWAA (178 aa)). Residue Asp-149 coordinates Ca(2+). The active site involves Arg-220. Position 225 (Asp-225) interacts with Ca(2+). Active-site residues include Glu-228 and Arg-262. The interval 306-331 (GRKGLWAASRPQKPWEWRRDKRNGTA) is disordered. Over residues 318-331 (KPWEWRRDKRNGTA) the composition is skewed to basic and acidic residues.

This sequence belongs to the thermonuclease family. It depends on Ca(2+) as a cofactor.

It localises to the cell membrane. Its function is as follows. Enzyme that catalyzes the hydrolysis of both DNA and RNA at the 5' position of the phosphodiester bond. The polypeptide is Probable staphylococcal-like nuclease CAN1 (Oryza sativa subsp. japonica (Rice)).